A 91-amino-acid chain; its full sequence is Putative septation protein SpoVG (91 aa).

The protein belongs to the SpoVG family.

Its function is as follows. Could be involved in septation. The chain is Putative septation protein SpoVG from Clostridium botulinum (strain Alaska E43 / Type E3).